Reading from the N-terminus, the 56-residue chain is Defensin-1 (56 aa).

Residues 1-24 form the signal peptide; that stretch reads MKAIVVLLILALILCLYAMTTVEG. 3 disulfides stabilise this stretch: C26-C45, C31-C53, and C35-C55.

It localises to the secreted. Functionally, antibacterial protein involved in the immune response to septic injury. When combined with 14.026 kDa and 14.059 kDa hemolymph antimicrobial peptides, it has a strong cooperative activity against the Gram-positive bacteria B.subtilis and S.aureus, and against the Gram-negative bacteria E.coli DH5-alpha and K.pneumoniae ATCC 138833. Does not show detectable antibacterial activity when present alone. Has no hemolytic activity in human erythrocytes. The sequence is that of Defensin-1 from Centruroides limpidus (Mexican scorpion).